We begin with the raw amino-acid sequence, 443 residues long: MAAHRKHVFVEKVLQRLFPPVPSGQGKREPQTLAVQNPPKKVTSEKVSQKHAEPLTDTGSETPTARRLYTASGPPEGYVPCWPEPSSCGSPENASSGDDTEDQDPHDQPKRRRIRKHKSKKKFKNPNNVLIEQAELEKQQSLLQEKSQRQHTDGTTISKNKKRKLKKKQQIKRKKAAGLAAKAAGVSFMYQPEDSSNEGEGVGEACEEDGVDTSEEDPTLAGEEDVKDTREEDGADASEEDLTRARQEEGADASEEDPTPAGEEDVKDAREEDGVDTIEEDLTRAGEEDGKDTREEDGADASEEDPTWAGEEEGADSGEEDGADASEEDDTITNEKAHSILNFLKSTQEMYFYDGVSRDAASAALADAAEELLDRLASHSMLPSDVSILYHMKTLLLLQDTERLKHALEMFPEHCTMPPDHARVISAFFSYWITHILPEKSSD.

Position 12 is an N6-acetyllysine (K12). The tract at residues 15–333 (QRLFPPVPSG…DASEEDDTIT (319 aa)) is disordered. Basic and acidic residues predominate over residues 42–54 (VTSEKVSQKHAEP). Residues 87–97 (SCGSPENASSG) show a composition bias toward polar residues. 2 stretches are compositionally biased toward basic residues: residues 109–124 (PKRR…KKFK) and 159–176 (KNKK…RKKA). Acidic residues predominate over residues 205-226 (ACEEDGVDTSEEDPTLAGEEDV). A phosphoserine mark is found at S238 and S254. Residues 250 to 266 (GADASEEDPTPAGEEDV) are compositionally biased toward acidic residues. T277 is subject to Phosphothreonine. The segment covering 281 to 296 (DLTRAGEEDGKDTREE) has biased composition (basic and acidic residues). The span at 297–332 (DGADASEEDPTWAGEEEGADSGEEDGADASEEDDTI) shows a compositional bias: acidic residues.

The chain is Glutamate-rich protein 1 (ERICH1) from Homo sapiens (Human).